The primary structure comprises 197 residues: MTALYLASASPRRRELLALLDLPFEVLKTEVEEQRHPGESAQVYVQRLAQDKARAGVAVAPQDLPVLGADTIVVLNGQVLEKPRDKEHAQQILSALSGQKHQVMTAVALADRQNMLSAMVVTDVTFRVLSPLEISDYIATGEPMDKAGAYGIQGKGGCFVRAIAGSYHAVVGLPLVETHELLSHFIAQRNVRGIHDS.

Asp70 (proton acceptor) is an active-site residue.

It belongs to the Maf family. YhdE subfamily. A divalent metal cation serves as cofactor.

The protein localises to the cytoplasm. It carries out the reaction dTTP + H2O = dTMP + diphosphate + H(+). The enzyme catalyses UTP + H2O = UMP + diphosphate + H(+). Its function is as follows. Nucleoside triphosphate pyrophosphatase that hydrolyzes dTTP and UTP. May have a dual role in cell division arrest and in preventing the incorporation of modified nucleotides into cellular nucleic acids. The polypeptide is dTTP/UTP pyrophosphatase (Yersinia pestis bv. Antiqua (strain Antiqua)).